The following is a 248-amino-acid chain: tRNA (guanine-N(1)-)-methyltransferase (248 aa).

Residues Gly113 and 133–138 (IGDYVL) contribute to the S-adenosyl-L-methionine site.

The protein belongs to the RNA methyltransferase TrmD family. Homodimer.

It is found in the cytoplasm. It catalyses the reaction guanosine(37) in tRNA + S-adenosyl-L-methionine = N(1)-methylguanosine(37) in tRNA + S-adenosyl-L-homocysteine + H(+). Functionally, specifically methylates guanosine-37 in various tRNAs. This Shewanella halifaxensis (strain HAW-EB4) protein is tRNA (guanine-N(1)-)-methyltransferase.